Reading from the N-terminus, the 161-residue chain is Sterile alpha motif domain-containing protein 12 (161 aa).

The disordered stretch occupies residues 44-64; that stretch reads QKVPDQKGTPKRLQGEAETAK. One can recognise an SAM domain in the interval 77–143; sequence WTQQDVCKWL…LQQVLQLKVR (67 aa).

This is Sterile alpha motif domain-containing protein 12 (Samd12) from Mus musculus (Mouse).